Consider the following 1659-residue polypeptide: Fatty acid synthase subunit alpha (1659 aa).

The disordered stretch occupies residues 114–139; that stretch reads TQAQASGGAGTIAGAGSSTAPVTAPP. A Carrier domain is found at 160–235; the sequence is AQAFEIVRTL…AALQKTFTGQ (76 aa). The residue at position 195 (S195) is an O-(pantetheine 4'-phosphoryl)serine. The ketoreductase (KR) domain stretch occupies residues 588 to 826; sequence GRSVLITGAG…LCLMFNTMCS (239 aa). A Ketosynthase family 3 (KS3) domain is found at 1030–1575; it reads KQLLHEVLIQ…QKGAQTIVVH (546 aa). Active-site for beta-ketoacyl synthase activity residues include C1217, H1458, and H1499. The tract at residues 1631–1659 is disordered; the sequence is ETLLDPTPPQTNVDDRVARSIVQQESAEP.

Belongs to the thiolase-like superfamily. Fungal fatty acid synthetase subunit alpha family. In terms of assembly, [Alpha(6)beta(6)] hexamers of two multifunctional subunits (alpha and beta). 4'-phosphopantetheine is transferred from CoA to a specific serine of the acyl carrier domain by the C-terminal PPT domain. This modification is essential for activity because fatty acids are bound in thioester linkage to the sulfhydryl of the prosthetic group.

It carries out the reaction acetyl-CoA + n malonyl-CoA + 2n NADPH + 4n H(+) = a long-chain-acyl-CoA + n CoA + n CO2 + 2n NADP(+).. The enzyme catalyses a fatty acyl-[ACP] + malonyl-[ACP] + H(+) = a 3-oxoacyl-[ACP] + holo-[ACP] + CO2. The catalysed reaction is a (3R)-hydroxyacyl-[ACP] + NADP(+) = a 3-oxoacyl-[ACP] + NADPH + H(+). It functions in the pathway secondary metabolite biosynthesis. In terms of biological role, fatty acid synthase subunit alpha; part of the gene cluster that mediates the biosynthesis of aspercryptins, linear lipopeptides built from six amino acids including 2 highly unusual and nonproteogenic amino acids, 2-amino-octanoic acid (2aoa) and 2-amino-dodecanol (2adol). The core structure of aspercryptins is as follows: Ser/Ala-Thr-Ile/Val-2aoa-Asn-2adol. The first step of aspercryptin biosynthesis is the generation of the fatty acid precursors, octanoic and dodecanoic acids, by the FAS subunits atnF and atnM. The fatty acid precursors are likely transformed into the corresponding alpha-amino fatty acids in three steps. First, they are hydroxylated by the cytochrome P450 monooxygenase atnE, then oxidized to the corresponding alpha-keto acids by the NAD(P)-dependent oxidoreductase atnD, and finally converted to the alpha-amino fatty acids by the PLP-dependent aminotransferases atnH or atnJ. the alpha-amino fatty acids, 2-amino-octanoic and 2-amino-dodecanoic acids, are recognized, activated, and covalently tethered to the NRPS atnA by its fourth and sixth adenylation domains. The second module of atnA is the Thr module and contains an epimerase (E) domain responsible for the epimerization of Thr to D-allo-Thr. Additionally, despite atnA having only one epimerase domain, the first amino acid of aspercryptin A1 is D-Ser, suggesting that serine is either loaded directly as D-Ser on the first module or that the epimerase domain in the threonine module epimerizes both L-Ser and L-Thr. After condensation of the hexapeptide of aspercryptin, the C-terminal reductase (TE) domain might be involved in the reductive release and production of the aldehyde hexapeptide. Further reduction would generate aspercryptins. The variety of aspercryptins produced reflects the flexibility of the atnA NRPS, allowing incorporation of alanine instead of serine, valine for isoleucine, and a C10 fatty amino alcohol instead of the C12 version. AtnB seems to be involved in the selectivity for Ile versus Val by the third module. Moreover, type B, C and D aspercryptins have an additional N-terminal cichorine, acetyl and propionyl group respectively. This is Fatty acid synthase subunit alpha from Emericella nidulans (strain FGSC A4 / ATCC 38163 / CBS 112.46 / NRRL 194 / M139) (Aspergillus nidulans).